The chain runs to 759 residues: Protein zyg-11 homolog A (759 aa).

3 LRR repeats span residues 204–227, 235–260, and 490–513; these read LPRL…LTCK, MHYL…CLLH, and VTSI…FMAV.

The protein belongs to the zyg-11 family.

Probably acts as a target recruitment subunit in an E3 ubiquitin ligase complex ZYGA-CUL2-elongin BC. This is Protein zyg-11 homolog A (ZYG11A) from Homo sapiens (Human).